Consider the following 521-residue polypeptide: Acetyl-CoA hydrolase (521 aa).

276 to 280 (GIGNI) serves as a coordination point for CoA. Catalysis depends on Glu-301, which acts as the 5-glutamyl coenzyme A thioester intermediate. Asn-391 and Gly-395 together coordinate CoA.

It belongs to the acetyl-CoA hydrolase/transferase family.

Its subcellular location is the cytoplasm. The catalysed reaction is acetyl-CoA + H2O = acetate + CoA + H(+). Its function is as follows. Presumably involved in regulating the intracellular acetyl-CoA pool for fatty acid and cholesterol synthesis and fatty acid oxidation. The polypeptide is Acetyl-CoA hydrolase (ach1) (Schizosaccharomyces pombe (strain 972 / ATCC 24843) (Fission yeast)).